A 296-amino-acid chain; its full sequence is SHSP domain-containing protein CPUR_05420 (296 aa).

The interval Ala-50–Asn-83 is disordered. The sHSP domain occupies Glu-169 to Val-296.

This sequence belongs to the small heat shock protein (HSP20) family.

In terms of biological role, monooxygenase; part of the ergochrome gene cluster responsible for the typical purple-black color of the ergot sclerotia. The ergochrome gene cluster produces several ergot pigments including the yellow ergochrome secalonic acid and its derivatives, as well as the red anthraquinones endocrocin and clavorubin. The pathway begins with the synthesis of atrochrysone thioester by the polyketide synthase (PKS) CPUR_05437. The atrochrysone carboxyl ACP thioesterase CPUR_05436 then breaks the thioester bond and releases the atrochrysone carboxylic acid from CPUR_05437. The atrochrysone carboxylic acid is then converted to atrochrysone which is further transformed into emodin anthrone. The next step is performed by the anthrone oxygenase CPUR_05434 that catalyzes the oxidation of emodinanthrone to emodin. Emodin is further modified to yield monodictyphenone via several steps involving CPUR_05427, CPUR_05428, CPUR_05429 and CPUR_05430. The short chain dehydrogenase/reductase CPUR_05418 then catalyzes the C-5 ketoreduction to give the xanthone skeleton of the monomeric units. Ergochromes formation requires further dimerization steps of different xanthone units, probably catalyzed by the cytochrome P450 monooxygenase CPUR_05419. CPUR_05425, CPUR_05426 and CPUR_05431 are unique to Claviceps, thus it is likely that they are involved in further modification of xanthone units or in their dimerization. The yellow ergochromes and the red anthraquinone pigments endocrocin and clavorubin are products from the same PKS derived precursors and the latter are likely shunt products in the pathway of xanthone biosynthesis. It is proposed that atrochrysone carboxylic acid released from the PKS CPUR_05437 can also be converted to endocrocin anthrone which is further oxidized into endocrocin by CPUR_05435. Endocrocin could be then modified to clavorubin, possibly by CPUR_05423 and CPUR_05431. Clavorubin is the principal anthraquinone metabolite produced by the cluster with a much higher yield compared to endocrocin. This chain is SHSP domain-containing protein CPUR_05420, found in Claviceps purpurea (strain 20.1) (Ergot fungus).